The primary structure comprises 212 residues: Large ribosomal subunit protein bL25 (212 aa).

The tract at residues 181-212 (LSEPKEEVIEEDVEEVSADVPTVSETEEEDAE) is disordered. Residues 188–197 (VIEEDVEEVS) are compositionally biased toward acidic residues.

The protein belongs to the bacterial ribosomal protein bL25 family. CTC subfamily. As to quaternary structure, part of the 50S ribosomal subunit; part of the 5S rRNA/L5/L18/L25 subcomplex. Contacts the 5S rRNA. Binds to the 5S rRNA independently of L5 and L18.

This is one of the proteins that binds to the 5S RNA in the ribosome where it forms part of the central protuberance. This chain is Large ribosomal subunit protein bL25, found in Finegoldia magna (strain ATCC 29328 / DSM 20472 / WAL 2508) (Peptostreptococcus magnus).